The primary structure comprises 568 residues: Nitrite reductase (568 aa).

The first 25 residues, Met-1–Ala-25, serve as a signal peptide directing secretion. The segment at Lys-26–Pro-54 is N-terminal tail. The 86-residue stretch at Asp-55–Gln-140 folds into the Cytochrome c domain. 6 residues coordinate heme c: Cys-72, Cys-75, His-76, Arg-96, Thr-109, and Met-113. The interval Pro-141–Tyr-568 is D1-heme domain. Positions 207, 250, 251, 270, 397, and 508 each coordinate heme d1.

In terms of assembly, homodimer. The cofactor is heme c. Requires heme as cofactor.

It is found in the periplasm. The catalysed reaction is nitric oxide + Fe(III)-[cytochrome c] + H2O = Fe(II)-[cytochrome c] + nitrite + 2 H(+). It carries out the reaction A + NH4(+) + H2O = hydroxylamine + AH2 + H(+). This Pseudomonas aeruginosa (strain ATCC 15692 / DSM 22644 / CIP 104116 / JCM 14847 / LMG 12228 / 1C / PRS 101 / PAO1) protein is Nitrite reductase (nirS).